A 121-amino-acid polypeptide reads, in one-letter code: Class I hydrophobin 2 (121 aa).

Positions 1–18 (MQFTTIVMTLAAAVAVTA) are cleaved as a signal peptide. 4 disulfide bridges follow: Cys52-Cys101, Cys60-Cys94, Cys61-Cys79, and Cys102-Cys116. Asn83 carries N-linked (GlcNAc...) asparagine glycosylation.

This sequence belongs to the fungal hydrophobin family. Self-assembles to form functional amyloid fibrils called rodlets. Self-assembly into fibrillar rodlets occurs spontaneously at hydrophobic:hydrophilic interfaces and the rodlets further associate laterally to form amphipathic monolayers. As to expression, expressed in conidia and aerial hyphae.

It is found in the secreted. The protein resides in the cell wall. Functionally, aerial growth, conidiation, and dispersal of filamentous fungi in the environment rely upon a capability of their secreting small amphipathic proteins called hydrophobins (HPBs) with low sequence identity. Class I can self-assemble into an outermost layer of rodlet bundles on aerial cell surfaces, conferring cellular hydrophobicity that supports fungal growth, development and dispersal; whereas Class II form highly ordered films at water-air interfaces through intermolecular interactions but contribute nothing to the rodlet structure. Hcf-2 is a class I hydrophobin that is not necessary for the development of hyphae or conidia but contributes to cell surface hydrophobicity. The sequence is that of Class I hydrophobin 2 from Passalora fulva (Tomato leaf mold).